The chain runs to 157 residues: Endoribonuclease YbeY (157 aa).

Histidine 111, histidine 115, and histidine 121 together coordinate Zn(2+).

The protein belongs to the endoribonuclease YbeY family. It depends on Zn(2+) as a cofactor.

Its subcellular location is the cytoplasm. In terms of biological role, single strand-specific metallo-endoribonuclease involved in late-stage 70S ribosome quality control and in maturation of the 3' terminus of the 16S rRNA. This Pseudomonas entomophila (strain L48) protein is Endoribonuclease YbeY.